The following is a 438-amino-acid chain: sn-glycerol-3-phosphate-binding periplasmic protein UgpB (438 aa).

The signal sequence occupies residues 1 to 23; sequence MKPLHYTASALALGLALMGNAQA. Positions 65, 89, 144, 270, 307, 346, and 397 each coordinate sn-glycerol 3-phosphate.

The protein belongs to the bacterial solute-binding protein 1 family. As to quaternary structure, the complex is composed of two ATP-binding proteins (UgpC), two transmembrane proteins (UgpA and UgpE) and a solute-binding protein (UgpB).

The protein resides in the periplasm. In terms of biological role, part of the ABC transporter complex UgpBAEC involved in sn-glycerol-3-phosphate (G3P) import. Binds G3P. This chain is sn-glycerol-3-phosphate-binding periplasmic protein UgpB (ugpB), found in Shigella dysenteriae serotype 1 (strain Sd197).